Consider the following 547-residue polypeptide: Calcium-dependent protein kinase 16 (547 aa).

Positions 1–53 (MGNCCRSPAAAAREDVKTSHFPASTGGGKKKPHQARNGGGGGGGGGGGGWEKK) are disordered. Gly-2 carries N-myristoyl glycine lipidation. Residues 37-49 (NGGGGGGGGGGGG) show a composition bias toward gly residues. The Protein kinase domain occupies 73 to 331 (YALDRELGRG…AKQVLEHTWL (259 aa)). ATP-binding positions include 79–87 (LGRGEFGVT) and Lys-102. Asp-197 (proton acceptor) is an active-site residue. The autoinhibitory domain stretch occupies residues 337–367 (APNVPLGDIVKSRLKQFSRMNRFKRRALRVI). EF-hand domains follow at residues 374–409 (EEVE…FGSH), 410–445 (LAES…LQRM), 446–481 (ANGE…DGAT), and 482–517 (DIME…GTDW). 17 residues coordinate Ca(2+): Asp-387, Asp-389, Asp-391, Glu-398, Asp-423, Asn-425, Glu-434, Asp-459, Asp-461, Asn-463, Tyr-465, Glu-470, Asp-495, Asp-497, Asp-499, Lys-501, and Glu-506.

This sequence belongs to the protein kinase superfamily. Ser/Thr protein kinase family. CDPK subfamily.

Its subcellular location is the membrane. It catalyses the reaction L-seryl-[protein] + ATP = O-phospho-L-seryl-[protein] + ADP + H(+). The enzyme catalyses L-threonyl-[protein] + ATP = O-phospho-L-threonyl-[protein] + ADP + H(+). Its activity is regulated as follows. Activated by calcium. Autophosphorylation may play an important role in the regulation of the kinase activity. Its function is as follows. May play a role in signal transduction pathways that involve calcium as a second messenger. This is Calcium-dependent protein kinase 16 from Oryza sativa subsp. japonica (Rice).